Reading from the N-terminus, the 282-residue chain is NADPH-dependent 7-cyano-7-deazaguanine reductase (282 aa).

Substrate is bound at residue 88-90 (IES). 90 to 91 (SK) serves as a coordination point for NADPH. Catalysis depends on cysteine 190, which acts as the Thioimide intermediate. The active-site Proton donor is aspartate 197. 229 to 230 (HE) contributes to the substrate binding site. 258 to 259 (RG) serves as a coordination point for NADPH.

Belongs to the GTP cyclohydrolase I family. QueF type 2 subfamily. Homodimer.

Its subcellular location is the cytoplasm. It catalyses the reaction 7-aminomethyl-7-carbaguanine + 2 NADP(+) = 7-cyano-7-deazaguanine + 2 NADPH + 3 H(+). The protein operates within tRNA modification; tRNA-queuosine biosynthesis. Functionally, catalyzes the NADPH-dependent reduction of 7-cyano-7-deazaguanine (preQ0) to 7-aminomethyl-7-deazaguanine (preQ1). This chain is NADPH-dependent 7-cyano-7-deazaguanine reductase, found in Escherichia coli O45:K1 (strain S88 / ExPEC).